Reading from the N-terminus, the 210-residue chain is MTGLFITLEGPEGAGKSTNREYLAERLREQGVDVVLTREPGGTPLAERIRELLLDPSDEPMAADTELLLVFAARAQHLQQVIRPALAKGCVVLCDRFTDATYAYQGGGRGLSIERIAQLEQFVQGELRPDLTLIFDLPVEVGLARAAARGRLDRFEQEGRGFFEAVRQAYLQRAVQAPQHYRVLDAGQTLAQVQADIDALLPSLLEACRG.

10-17 (GPEGAGKS) lines the ATP pocket.

The protein belongs to the thymidylate kinase family.

It catalyses the reaction dTMP + ATP = dTDP + ADP. Phosphorylation of dTMP to form dTDP in both de novo and salvage pathways of dTTP synthesis. This chain is Thymidylate kinase, found in Ectopseudomonas mendocina (strain ymp) (Pseudomonas mendocina).